An 87-amino-acid polypeptide reads, in one-letter code: MAWVHGRVQGVGFRYTTQHEATRLGLTGYARNLDDGSVEVLACGEAEQVEKLIAWLKAGGPRSAHVEKVLTEPHSPTEDYQDFRIRY.

Positions 1 to 87 constitute an Acylphosphatase-like domain; sequence MAWVHGRVQG…EDYQDFRIRY (87 aa). Active-site residues include arginine 14 and asparagine 32.

This sequence belongs to the acylphosphatase family.

The catalysed reaction is an acyl phosphate + H2O = a carboxylate + phosphate + H(+). This chain is Acylphosphatase (acyP), found in Cronobacter sakazakii (strain ATCC BAA-894) (Enterobacter sakazakii).